The chain runs to 343 residues: GTPase Obg (343 aa).

In terms of domain architecture, Obg spans 1–159 (MQFIDHATIC…RQLRLELKLL (159 aa)). The OBG-type G domain maps to 160 to 328 (AEVGLIGLPN…LLRLVWQWLD (169 aa)). Residues 166–173 (GLPNAGKS), 191–195 (FTTLV), 213–216 (DIPG), 280–283 (NKID), and 309–311 (SSA) contribute to the GTP site. 2 residues coordinate Mg(2+): S173 and T193.

It belongs to the TRAFAC class OBG-HflX-like GTPase superfamily. OBG GTPase family. Monomer. The cofactor is Mg(2+).

It localises to the cytoplasm. An essential GTPase which binds GTP, GDP and possibly (p)ppGpp with moderate affinity, with high nucleotide exchange rates and a fairly low GTP hydrolysis rate. Plays a role in control of the cell cycle, stress response, ribosome biogenesis and in those bacteria that undergo differentiation, in morphogenesis control. This chain is GTPase Obg, found in Synechococcus elongatus (strain ATCC 33912 / PCC 7942 / FACHB-805) (Anacystis nidulans R2).